The primary structure comprises 406 residues: MSASQDSRSRDNGPDGMEPEGVIESNWNEIVDSFDDMNLSESLLRGIYAYGFEKPSAIQQRAILPCIKGYDVIAQAQSGTGKTATFAISILQQIELDLKATQALVLAPTRELAQQIQKVVMALGDYMGASCHACIGGTNVRAEVQKLQMEAPHIIVGTPGRVFDMLNRRYLSPKYIKMFVLDEADEMLSRGFKDQIYDIFQKLNSNTQVVLLSATMPSDVLEVTKKFMRDPIRILVKKEELTLEGIRQFYINVEREEWKLDTLCDLYETLTITQAVIFINTRRKVDWLTEKMHARDFTVSAMHGDMDQKERDVIMREFRSGSSRVLITTDLLARGIDVQQVSLVINYDLPTNRENYIHRIGRGGRFGRKGVAINMVTEEDKRTLRDIETFYNTSIEEMPLNVADLI.

The disordered stretch occupies residues 1-21 (MSASQDSRSRDNGPDGMEPEG). N-acetylserine is present on Ser-2. Ser-4 is subject to Phosphoserine. Positions 32–60 (DSFDDMNLSESLLRGIYAYGFEKPSAIQQ) match the Q motif motif. Residues 63 to 234 (ILPCIKGYDV…KKFMRDPIRI (172 aa)) form the Helicase ATP-binding domain. 76–83 (AQSGTGKT) contacts ATP. Residue Lys-118 is modified to N6-acetyllysine. Lys-146 participates in a covalent cross-link: Glycyl lysine isopeptide (Lys-Gly) (interchain with G-Cter in SUMO2). Residue Thr-158 is modified to Phosphothreonine. Lys-174 is modified (N6-acetyllysine). The DEAD box signature appears at 182–185 (DEAD). Position 193 is an N6-acetyllysine (Lys-193). Lys-225 participates in a covalent cross-link: Glycyl lysine isopeptide (Lys-Gly) (interchain with G-Cter in SUMO2). An N6-acetyllysine; alternate modification is found at Lys-238. Lys-238 participates in a covalent cross-link: Glycyl lysine isopeptide (Lys-Gly) (interchain with G-Cter in SUMO2); alternate. The Helicase C-terminal domain maps to 245–406 (GIRQFYINVE…EMPLNVADLI (162 aa)). Residues Lys-309, Lys-369, and Lys-381 each participate in a glycyl lysine isopeptide (Lys-Gly) (interchain with G-Cter in SUMO2) cross-link.

Belongs to the DEAD box helicase family. eIF4A subfamily. In terms of assembly, eIF4F is a multi-subunit complex, the composition of which varies with external and internal environmental conditions. It is composed of at least EIF4A, EIF4E and EIF4G1/EIF4G3. Interacts with PAIP1, EIF4E and UPF2. Found in a complex with XPO7, EIF4A1, ARHGAP1, VPS26A, VPS29, VPS35 and SFN. May interact with NOM1. Interacts with PDCD4; this interferes with the interaction between EIF4A and EIF4G. Interacts with RBM4. Interacts with DDX3X in an RNA-independent manner. Interacts with PKP1 (via N-terminus); the interaction promotes EIF4A1 recruitment to the cap-dependent translation complex and EIF4A1 ATPase activity.

Its subcellular location is the cytoplasm. The protein localises to the perinuclear region. It is found in the cell membrane. It localises to the stress granule. It carries out the reaction ATP + H2O = ADP + phosphate + H(+). In terms of biological role, ATP-dependent RNA helicase which is a subunit of the eIF4F complex involved in cap recognition and is required for mRNA binding to ribosome. In the current model of translation initiation, eIF4A unwinds RNA secondary structures in the 5'-UTR of mRNAs which is necessary to allow efficient binding of the small ribosomal subunit, and subsequent scanning for the initiator codon. As a result, promotes cell proliferation and growth. The sequence is that of Eukaryotic initiation factor 4A-I (EIF4A1) from Bos taurus (Bovine).